The sequence spans 444 residues: Phosphoglucosamine mutase (444 aa).

The active-site Phosphoserine intermediate is the serine 103. Serine 103, aspartate 241, aspartate 243, and aspartate 245 together coordinate Mg(2+). Serine 103 bears the Phosphoserine mark.

Belongs to the phosphohexose mutase family. Requires Mg(2+) as cofactor. Post-translationally, activated by phosphorylation.

The enzyme catalyses alpha-D-glucosamine 1-phosphate = D-glucosamine 6-phosphate. Functionally, catalyzes the conversion of glucosamine-6-phosphate to glucosamine-1-phosphate. The polypeptide is Phosphoglucosamine mutase (Deinococcus geothermalis (strain DSM 11300 / CIP 105573 / AG-3a)).